The primary structure comprises 298 residues: Rhodopsin (298 aa).

The Extracellular segment spans residues I1–M15. Residues Y16–V40 traverse the membrane as a helical segment. Over F41–N52 the chain is Cytoplasmic. A helical transmembrane segment spans residues L53 to V75. Over T76–C89 the chain is Extracellular. A disulfide bridge connects residues C89 and C166. A helical membrane pass occupies residues Q90–F112. Residues D113 to Y115 carry the 'Ionic lock' involved in activated form stabilization motif. The Cytoplasmic portion of the chain corresponds to D113–K131. A helical transmembrane segment spans residues A132 to F152. At G153 to S179 the chain is on the extracellular side. N-linked (GlcNAc...) asparagine glycosylation is present at N162. A helical transmembrane segment spans residues Y180–V201. Topologically, residues F202–K242 are cytoplasmic. Residues I243–V264 traverse the membrane as a helical segment. The Extracellular portion of the chain corresponds to G265–V275. The helical transmembrane segment at Y276–I297 threads the bilayer. Position 285 is an N6-(retinylidene)lysine (K285).

Belongs to the G-protein coupled receptor 1 family. Opsin subfamily. Homodimer. Interacts with GNAQ. Post-translationally, contains one covalently linked retinal chromophore.

The protein localises to the cell projection. The protein resides in the rhabdomere membrane. Its function is as follows. Photoreceptor required for image-forming vision at low light intensity. Can use both retinal and 3-dehydroretinal as visual pigment. Light-induced isomerization of 11-cis to all-trans retinal triggers a conformational change that activates signaling via G-proteins. Signaling via GNAQ probably mediates the activation of phospholipase C. This Procambarus orcinus (Crayfish) protein is Rhodopsin (RHO).